A 364-amino-acid chain; its full sequence is MRVLAAMSGGVDSAVAAARAVAAGHDVVGVHLALSAEPGTLRTGSRGCCSKEDAGDARRAADVLGIPFYVWDFADRFKEDVIDDFVASYAAGETPNPCLRCNEKIKFAALADRAIALGFDAVATGHYAQLENGVLRRAVDADKDQSYVLGVLTAEQLSRAMFPVGDTPKDRIREEAAERGLAVANKPDSHDICFIPSGDTRAFLGAHIGVRPGSVVDADSGEVLAEHEGVHGFTIGQRKGLGVQGPAADGQPRYVTSIEPETGTVRVGSARDLEVHAITADRAVWTSGRAPSGPVECTVQVRAHGGLAEAVAEAVDGGIRISLREPLTGVAKGQAAVLYRTDPAGDIVLGSGTISGTDARPNTQ.

ATP-binding positions include 6-13 (AMSGGVDS) and L32. The Nucleophile role is filled by C101. A disulfide bond links C101 and C193. G125 is a binding site for ATP. The interaction with tRNA stretch occupies residues 143-145 (KDQ). The active-site Cysteine persulfide intermediate is C193.

It belongs to the MnmA/TRMU family.

The protein resides in the cytoplasm. The catalysed reaction is S-sulfanyl-L-cysteinyl-[protein] + uridine(34) in tRNA + AH2 + ATP = 2-thiouridine(34) in tRNA + L-cysteinyl-[protein] + A + AMP + diphosphate + H(+). Functionally, catalyzes the 2-thiolation of uridine at the wobble position (U34) of tRNA, leading to the formation of s(2)U34. The chain is tRNA-specific 2-thiouridylase MnmA from Rhodococcus opacus (strain B4).